The sequence spans 254 residues: Probable triosephosphate isomerase 2 (254 aa).

A substrate-binding site is contributed by 9-11; that stretch reads NMK. H96 serves as the catalytic Electrophile. E168 serves as the catalytic Proton acceptor. Substrate is bound by residues G174 and S212.

Belongs to the triosephosphate isomerase family. As to quaternary structure, homodimer.

It is found in the cytoplasm. The enzyme catalyses D-glyceraldehyde 3-phosphate = dihydroxyacetone phosphate. It participates in carbohydrate biosynthesis; gluconeogenesis. It functions in the pathway carbohydrate degradation; glycolysis; D-glyceraldehyde 3-phosphate from glycerone phosphate: step 1/1. Functionally, involved in the gluconeogenesis. Catalyzes stereospecifically the conversion of dihydroxyacetone phosphate (DHAP) to D-glyceraldehyde-3-phosphate (G3P). This chain is Probable triosephosphate isomerase 2, found in Listeria monocytogenes serotype 4b (strain F2365).